We begin with the raw amino-acid sequence, 482 residues long: Spore germination protein A1 (482 aa).

The next 6 membrane-spanning stretches (helical) occupy residues 242-262, 284-304, 321-341, 351-371, 373-393, and 406-426; these read VAILVDSSPFVLLVPVSLGIL, FASIFITLFLSSIYITLVSFH, ENVPFPPIFEALLMEVTIELL, PLGQTIGLVGGVVIGQAAVEA, LVSSILVIVVSVIALASFTVP, and FISMFSAAILGLYGIILFMLV.

This sequence belongs to the GerABKA family.

It is found in the cell membrane. Forms a complex at the inner spore membrane which acts as a receptor for L-alanine, thus is involved in the stimulation of germination in response to alanine. Can stimulate germination in the absence of GerD and GerK gene products (fructose and glucose receptors, respectively), but the response is improved in their presence. In Bacillus subtilis (strain 168), this protein is Spore germination protein A1 (gerAA).